A 1182-amino-acid polypeptide reads, in one-letter code: CRISPR-associated endoribonuclease Cas13a (1182 aa).

Positions 132-279 (FNNLIEKVQN…ENNSDNKLKQ (148 aa)) form a coiled coil. The segment at 366–508 (YIKNTGQLET…NNEEIKGYFI (143 aa)) is HEPN-like fold 1. Positions 896–955 (KVEKENIEDYNKKEEIEQKKKSNIEKLQDLKVELHKKWEQNKITEKEIEKYNNTTRKINE) form a coiled coil. The segment at 965-1120 (LQNVYLLHEM…QNHILKSTKT (156 aa)) is HEPN-like fold 2.

Belongs to the CRISPR-associated endoribonuclease Cas13a family. Requires a divalent metal cation as cofactor.

With respect to regulation, target RNA acts as an activator for non-specific ssRNA degradation. Functionally, CRISPR (clustered regularly interspaced short palindromic repeat), is an adaptive immune system that provides protection against mobile genetic elements (viruses, transposable elements and conjugative plasmids). CRISPR clusters contain sequences complementary to antecedent mobile elements and target invading nucleic acids. Unlike many single-component effectors, this CRISPR-Cas system targets RNA. CRISPR clusters are transcribed from pre-CRISPR RNA (crRNA) and processed into crRNA by this protein. Cleaves linear target ssRNA in a pre-crRNA-dependent fashion, preferentially before U residues. Binding a viable target RNA target activates this protein for non-specific RNA degradation in vitro (called collateral RNA degradation), which is fairly sensitive as it requires picomolar levels of viable target RNA. In Leptotrichia wadei (strain F0279), this protein is CRISPR-associated endoribonuclease Cas13a.